The chain runs to 810 residues: Lon protease (810 aa).

A Lon N-terminal domain is found at 16–209; that stretch reads YPVPPLRDIV…RVYAFMEGEI (194 aa). ATP is bound at residue 361-368; the sequence is GPPGVGKT. Residues 598 to 779 form the Lon proteolytic domain; that stretch reads EDLVGVTTGL…DDVLKHALVR (182 aa). Catalysis depends on residues S685 and K728.

It belongs to the peptidase S16 family. As to quaternary structure, homohexamer. Organized in a ring with a central cavity.

Its subcellular location is the cytoplasm. It carries out the reaction Hydrolysis of proteins in presence of ATP.. ATP-dependent serine protease that mediates the selective degradation of mutant and abnormal proteins as well as certain short-lived regulatory proteins. Required for cellular homeostasis and for survival from DNA damage and developmental changes induced by stress. Degrades polypeptides processively to yield small peptide fragments that are 5 to 10 amino acids long. Binds to DNA in a double-stranded, site-specific manner. Involved in iron uptake. This chain is Lon protease, found in Azospirillum brasilense.